Consider the following 127-residue polypeptide: MYENLKSLGIQEPTSVDSYTLRQEANHDILKIYFKKQKGEFFAKSVKFKYPRQRKTMLVDSGTHEYKDVTEINANLKYVVDELDNLTQGVHIQADPDIKQKILRDLRHLEKVVQNKISEIERDLEKL.

Belongs to the UPF0325 family.

In Aeromonas salmonicida (strain A449), this protein is UPF0325 protein ASA_3165.